We begin with the raw amino-acid sequence, 223 residues long: Ribonuclease 3 (223 aa).

Positions 3 to 125 (LERLQKKLSY…IIAAIYLDAG (123 aa)) constitute an RNase III domain. Glu-38 contacts Mg(2+). Residue Asp-42 is part of the active site. Positions 111 and 114 each coordinate Mg(2+). Glu-114 is an active-site residue. The 71-residue stretch at 152–222 (DPKTRLQEFL…AEQVLAKLTT (71 aa)) folds into the DRBM domain.

It belongs to the ribonuclease III family. Homodimer. The cofactor is Mg(2+).

The protein localises to the cytoplasm. It catalyses the reaction Endonucleolytic cleavage to 5'-phosphomonoester.. In terms of biological role, digests double-stranded RNA. Involved in the processing of primary rRNA transcript to yield the immediate precursors to the large and small rRNAs (23S and 16S). Processes some mRNAs, and tRNAs when they are encoded in the rRNA operon. Processes pre-crRNA and tracrRNA of type II CRISPR loci if present in the organism. In Actinobacillus pleuropneumoniae serotype 5b (strain L20), this protein is Ribonuclease 3.